Here is a 219-residue protein sequence, read N- to C-terminus: Dynein light chain Tctex-type 4 (219 aa).

The interval 1-84 is disordered; it reads MACRTLPSRR…RRPSLGPVPP (84 aa). Over residues 9 to 20 the composition is skewed to basic and acidic residues; sequence RRQEEETTKDLA. Phosphoserine is present on serine 64.

It belongs to the dynein light chain Tctex-type family. In terms of assembly, interacts with ENG/endoglin, TGFBR2 and TGFBR3. Interacts with PPP1CC.

It is found in the cell projection. Its subcellular location is the cilium. It localises to the flagellum. The protein localises to the cytoplasmic vesicle. The protein resides in the secretory vesicle. It is found in the acrosome. Its subcellular location is the cytoplasm. It localises to the cytoskeleton. The protein localises to the cilium axoneme. The protein resides in the nucleus. It is found in the microtubule organizing center. This is Dynein light chain Tctex-type 4 (Dynlt4) from Mus musculus (Mouse).